Reading from the N-terminus, the 345-residue chain is NADPH dehydrogenase (345 aa).

23–26 (SPMC) contributes to the FMN binding site. Tyrosine 28 contributes to the substrate binding site. Residues alanine 60 and glutamine 102 each coordinate FMN. 164–167 (HGAH) serves as a coordination point for substrate. Residues arginine 215 and 307 to 308 (GR) contribute to the FMN site.

It belongs to the NADH:flavin oxidoreductase/NADH oxidase family. NamA subfamily. Homotetramer. The cofactor is FMN.

It carries out the reaction A + NADPH + H(+) = AH2 + NADP(+). Its function is as follows. Catalyzes the reduction of the double bond of an array of alpha,beta-unsaturated aldehydes and ketones. It also reduces the nitro group of nitroester and nitroaromatic compounds. It could have a role in detoxification processes. In Bacillus thuringiensis (strain Al Hakam), this protein is NADPH dehydrogenase.